Consider the following 179-residue polypeptide: Large ribosomal subunit protein uL5 (179 aa).

Belongs to the universal ribosomal protein uL5 family. In terms of assembly, part of the 50S ribosomal subunit; part of the 5S rRNA/L5/L18/L25 subcomplex. Contacts the 5S rRNA and the P site tRNA. Forms a bridge to the 30S subunit in the 70S ribosome.

Its function is as follows. This is one of the proteins that bind and probably mediate the attachment of the 5S RNA into the large ribosomal subunit, where it forms part of the central protuberance. In the 70S ribosome it contacts protein S13 of the 30S subunit (bridge B1b), connecting the 2 subunits; this bridge is implicated in subunit movement. Contacts the P site tRNA; the 5S rRNA and some of its associated proteins might help stabilize positioning of ribosome-bound tRNAs. The protein is Large ribosomal subunit protein uL5 of Shewanella oneidensis (strain ATCC 700550 / JCM 31522 / CIP 106686 / LMG 19005 / NCIMB 14063 / MR-1).